The chain runs to 122 residues: Large ribosomal subunit protein uL18 (122 aa).

Belongs to the universal ribosomal protein uL18 family. In terms of assembly, part of the 50S ribosomal subunit; part of the 5S rRNA/L5/L18/L25 subcomplex. Contacts the 5S and 23S rRNAs.

In terms of biological role, this is one of the proteins that bind and probably mediate the attachment of the 5S RNA into the large ribosomal subunit, where it forms part of the central protuberance. This is Large ribosomal subunit protein uL18 from Ruminiclostridium cellulolyticum (strain ATCC 35319 / DSM 5812 / JCM 6584 / H10) (Clostridium cellulolyticum).